Consider the following 296-residue polypeptide: tRNA dimethylallyltransferase (296 aa).

Position 2-9 (2-9 (GPTASGKT)) interacts with ATP. A substrate-binding site is contributed by 4 to 9 (TASGKT). 3 interaction with substrate tRNA regions span residues 27-30 (DSAL), 151-155 (QRLAR), and 232-237 (RCVGYR).

Belongs to the IPP transferase family. In terms of assembly, monomer. The cofactor is Mg(2+).

It carries out the reaction adenosine(37) in tRNA + dimethylallyl diphosphate = N(6)-dimethylallyladenosine(37) in tRNA + diphosphate. Its function is as follows. Catalyzes the transfer of a dimethylallyl group onto the adenine at position 37 in tRNAs that read codons beginning with uridine, leading to the formation of N6-(dimethylallyl)adenosine (i(6)A). This Shewanella pealeana (strain ATCC 700345 / ANG-SQ1) protein is tRNA dimethylallyltransferase.